The chain runs to 425 residues: tRNA(Ile)-lysidine synthase (425 aa).

37 to 42 provides a ligand contact to ATP; sequence SGGKDS.

This sequence belongs to the tRNA(Ile)-lysidine synthase family.

Its subcellular location is the cytoplasm. It catalyses the reaction cytidine(34) in tRNA(Ile2) + L-lysine + ATP = lysidine(34) in tRNA(Ile2) + AMP + diphosphate + H(+). Functionally, ligates lysine onto the cytidine present at position 34 of the AUA codon-specific tRNA(Ile) that contains the anticodon CAU, in an ATP-dependent manner. Cytidine is converted to lysidine, thus changing the amino acid specificity of the tRNA from methionine to isoleucine. In Leptospira borgpetersenii serovar Hardjo-bovis (strain JB197), this protein is tRNA(Ile)-lysidine synthase.